The following is a 255-amino-acid chain: MKNSKVIKLQDRVPKLKNQKKRNKPPVNHRLILYISILFLLVLFLIYFRSPLSNIKKISVFGNHYMTDEQVMEKSGITYKTSYFRVTARQAEENLKKQIEIKSVDVKKRFPNKIDIHIEEYVTIGYINKNGKLQPLLENGKTLDILPSGKLPVAAPIFEPFKEEKMKELISELEKLTPTILRSISEIRYTPTTSNESHLTLYMNEGYEVSTTIQDFAKRMEAYPLILKQIEPGRKALIDLEVATYFKYLDDEKKK.

Residues 1–30 are Cytoplasmic-facing; that stretch reads MKNSKVIKLQDRVPKLKNQKKRNKPPVNHR. Residues 31-51 form a helical membrane-spanning segment; sequence LILYISILFLLVLFLIYFRSP. The Extracellular portion of the chain corresponds to 52-255; it reads LSNIKKISVF…FKYLDDEKKK (204 aa). Residues 53–121 form the POTRA domain; the sequence is SNIKKISVFG…NKIDIHIEEY (69 aa).

This sequence belongs to the FtsQ/DivIB family. DivIB subfamily.

The protein resides in the cell membrane. Cell division protein that may be involved in stabilizing or promoting the assembly of the division complex. This Bacillus cytotoxicus (strain DSM 22905 / CIP 110041 / 391-98 / NVH 391-98) protein is Cell division protein DivIB.